Consider the following 34-residue polypeptide: Cytochrome b6-f complex subunit 5 (34 aa).

Residues 5 to 25 form a helical membrane-spanning segment; that stretch reads LLSGIVLGLVPVTLAGLFVTA.

This sequence belongs to the PetG family. As to quaternary structure, the 4 large subunits of the cytochrome b6-f complex are cytochrome b6, subunit IV (17 kDa polypeptide, PetD), cytochrome f and the Rieske protein, while the 4 small subunits are PetG, PetL, PetM and PetN. The complex functions as a dimer.

Its subcellular location is the plastid. It localises to the chloroplast thylakoid membrane. Its function is as follows. Component of the cytochrome b6-f complex, which mediates electron transfer between photosystem II (PSII) and photosystem I (PSI), cyclic electron flow around PSI, and state transitions. PetG is required for either the stability or assembly of the cytochrome b6-f complex. The polypeptide is Cytochrome b6-f complex subunit 5 (Oltmannsiellopsis viridis (Marine flagellate)).